Here is a 1260-residue protein sequence, read N- to C-terminus: MGTLGFVLGTAAMDHQQVLIDQLVDQVKNTPADDTFYYLVPNHIKFETEINVLAGLRDRQGLSGSDRFASSRVQVLSFSRLAWYLLRDTPAFQKQHLSKIGMAMLTSQVVQEQASDLRLYASEVKQPGFIQKMTAQLEELKNANITADDLTDIIYRVKSANDPAANQAWLAKMYDVETIYHAYEARLRDRYIGNSELYRQLVSYLQKSPEVAKMHFFIDRFAQFTANEQQVVDALITNAASTTISLTLDRGYPDQNHPNPQELPPKNNLFYSSAMQFHRLWKFGQMHQKEVKVLQNVAFATTPRVDAELQQVDSYFKRYASEPIGPGEREELLDPQNIQFMTTTNRMTELNNVATQIRQLVASGKYRYRDFLILSRHLDGYQTMIEPVFAAHNIPVFNDHERLMDNHPLVTLLTTLLELPQRGYRTADIIQLLKTWLLVPRTGTGDLMGLSDFQAAVFTTENWCLKQAIEGKNAWTTNDPEKIKQLWQAPGTNLTDPKYEQSRLEKLNDQLALVKDFVANHLLPVFDQFKQAQTGQELATALYQFLAAMGVTDRLYAWQQYQSTRDLDLARQPQQVWTTFCQILQEYVEILGQQELRDGTNEVLADFSELLQAGFAAAQYSQIPATLDQVVVSETGIVQSENRKVVFMIGSTDDVMPEMQESDSLLTDQDKDILSAYLDEDFQYLPGTAIDQLIDEPFVHYTGFMNAKEQLIFSAPQSDSDDKELSISPYMHDMARYFGQPVREYPLATSKAGQDNAIDFVSAPLATINRLVEVSRQIRDEQGVGIDRQPVMPVGWQTVAESLVKLAKQWQQSADAKVQAEGISLGQRLSLVAAGFHYQNKIDSLGNKLAQALYLRAAPDDERGRVLYASISQLQDFYINQYEYFLKYGLRLQKRDELTLSNDRIGTFFHKAMETFVTTIRENNLSFADLAHKDNQMQRDQLIDHALVTAQENQPTLLRLINSSAQAQFQYQQLTAIVKTMLITLCRQAEYTGSQPVKTEVQFGRIGNQQPGNLGSLDYPLKDNHHIYLRGRIDRIDNLKQGNNNFLTVVDYKSSNHLFDLTSAYYGLSLQLLTYLNGLQANLTELETNNPRLAGALYLRLNNPTIKAAELKKSSLDDLKLKEHQYKGILLNDPQLLRELDKSLDKQAFLYPLKEYKNGKIKANKEALLVTPQQLDWLQNMNKELVINAGNQILSGDLKLNPYRLLTGSNRRTGLDYSDFLDVFQFDNMLDQQNYRDLNPNLAKEAFDNVVQDDDEEDKK.

Belongs to the helicase family. AddB/RexB type 2 subfamily. In terms of assembly, heterodimer of AddA and RexB. The cofactor is Mg(2+).

In terms of biological role, the heterodimer acts as both an ATP-dependent DNA helicase and an ATP-dependent, dual-direction single-stranded exonuclease. Recognizes the chi site generating a DNA molecule suitable for the initiation of homologous recombination. This subunit has 5' -&gt; 3' nuclease activity but not helicase activity. The protein is ATP-dependent helicase/deoxyribonuclease subunit B of Limosilactobacillus reuteri (strain DSM 20016) (Lactobacillus reuteri).